We begin with the raw amino-acid sequence, 515 residues long: Maturase K (515 aa).

It belongs to the intron maturase 2 family. MatK subfamily.

The protein localises to the plastid. It is found in the chloroplast. Its function is as follows. Usually encoded in the trnK tRNA gene intron. Probably assists in splicing its own and other chloroplast group II introns. The chain is Maturase K from Pseudotsuga menziesii (Douglas-fir).